Reading from the N-terminus, the 268-residue chain is 4-hydroxy-tetrahydrodipicolinate reductase (268 aa).

NAD(+)-binding positions include 8–13 (GAAGRM) and Asp35. An NADP(+)-binding site is contributed by Arg36. Residues 99–101 (GTT) and 123–126 (AANF) contribute to the NAD(+) site. Catalysis depends on His156, which acts as the Proton donor/acceptor. (S)-2,3,4,5-tetrahydrodipicolinate is bound at residue His157. Catalysis depends on Lys160, which acts as the Proton donor. Residue 166–167 (GT) coordinates (S)-2,3,4,5-tetrahydrodipicolinate.

It belongs to the DapB family.

The protein resides in the cytoplasm. The enzyme catalyses (S)-2,3,4,5-tetrahydrodipicolinate + NAD(+) + H2O = (2S,4S)-4-hydroxy-2,3,4,5-tetrahydrodipicolinate + NADH + H(+). It carries out the reaction (S)-2,3,4,5-tetrahydrodipicolinate + NADP(+) + H2O = (2S,4S)-4-hydroxy-2,3,4,5-tetrahydrodipicolinate + NADPH + H(+). Its pathway is amino-acid biosynthesis; L-lysine biosynthesis via DAP pathway; (S)-tetrahydrodipicolinate from L-aspartate: step 4/4. In terms of biological role, catalyzes the conversion of 4-hydroxy-tetrahydrodipicolinate (HTPA) to tetrahydrodipicolinate. The polypeptide is 4-hydroxy-tetrahydrodipicolinate reductase (Pseudomonas aeruginosa (strain LESB58)).